Consider the following 213-residue polypeptide: Holliday junction branch migration complex subunit RuvA (213 aa).

Positions 1-64 (MIARLVGFLV…EDSITLFGFA (64 aa)) are domain I. The segment at 65-143 (SYLERDWFRL…AIALFSSAKG (79 aa)) is domain II. The segment at 144-159 (DHLAVEDISQPAASAH) is flexible linker. The tract at residues 160-213 (HAGNFMADAVSALLNLGFKPAEAQRVVQLASEELGDQATLDSLVRLALRLSSKH) is domain III.

It belongs to the RuvA family. Homotetramer. Forms an RuvA(8)-RuvB(12)-Holliday junction (HJ) complex. HJ DNA is sandwiched between 2 RuvA tetramers; dsDNA enters through RuvA and exits via RuvB. An RuvB hexamer assembles on each DNA strand where it exits the tetramer. Each RuvB hexamer is contacted by two RuvA subunits (via domain III) on 2 adjacent RuvB subunits; this complex drives branch migration. In the full resolvosome a probable DNA-RuvA(4)-RuvB(12)-RuvC(2) complex forms which resolves the HJ.

It is found in the cytoplasm. Its function is as follows. The RuvA-RuvB-RuvC complex processes Holliday junction (HJ) DNA during genetic recombination and DNA repair, while the RuvA-RuvB complex plays an important role in the rescue of blocked DNA replication forks via replication fork reversal (RFR). RuvA specifically binds to HJ cruciform DNA, conferring on it an open structure. The RuvB hexamer acts as an ATP-dependent pump, pulling dsDNA into and through the RuvAB complex. HJ branch migration allows RuvC to scan DNA until it finds its consensus sequence, where it cleaves and resolves the cruciform DNA. The chain is Holliday junction branch migration complex subunit RuvA from Zymomonas mobilis subsp. mobilis (strain ATCC 31821 / ZM4 / CP4).